The primary structure comprises 301 residues: Probable alpha-L-glutamate ligase (301 aa).

The ATP-grasp domain occupies 104-287 (LQLLSRKGVG…IAGMVIDFIE (184 aa)). Residues Lys141, 178-179 (EY), Asp187, and 211-213 (RSN) each bind ATP. Residues Asp248, Glu260, and Asn262 each contribute to the Mg(2+) site. Residues Asp248, Glu260, and Asn262 each contribute to the Mn(2+) site.

The protein belongs to the RimK family. Mg(2+) serves as cofactor. Mn(2+) is required as a cofactor.

This chain is Probable alpha-L-glutamate ligase, found in Pseudoalteromonas translucida (strain TAC 125).